The primary structure comprises 540 residues: Synaptotagmin-3 (540 aa).

Residues 9 to 29 form a helical membrane-spanning segment; the sequence is GIIGFVIGIPIGLILGFFVLI. Residues 67 to 249 enclose the SMP-LTD domain; that stretch reads DYERVDWFNK…WPQVLEIPIL (183 aa). The phospholipid binding stretch occupies residues 227–509; that stretch reads QETIKRQVSS…ELGHVDINLD (283 aa). C2 domains are found at residues 240-363 and 401-521; these read WPQV…EFNL and RKES…NQKY. Ca(2+)-binding residues include Asp-277, Asp-283, Asp-333, Asp-335, and Asp-341.

The protein belongs to the synaptotagmin family. Ca(2+) is required as a cofactor.

The protein resides in the membrane. Functionally, may be involved in membrane trafficking. The sequence is that of Synaptotagmin-3 (SYT3) from Arabidopsis thaliana (Mouse-ear cress).